The following is an 832-amino-acid chain: Mucosa-associated lymphoid tissue lymphoma translocation protein 1 homolog (832 aa).

The interval 1–39 is disordered; it reads MSLWGQPLQASPPLAVRQPPTASSGPSTSPPAGATLNRL. The residue at position 2 (Ser-2) is an N-acetylserine. Residues 19 to 39 are compositionally biased toward low complexity; it reads PPTASSGPSTSPPAGATLNRL. In terms of domain architecture, Death spans 45–132; sequence RRLSESLDRA…EVLPLLNPPG (88 aa). Ig-like C2-type domains lie at 131–207 and 218–314; these read PGLK…FEFS and AEVT…KKAE. Ser-141 carries the phosphoserine modification. 2 disulfide bridges follow: Cys-154-Cys-196 and Cys-257-Cys-299. Residues 356–570 are caspase-like; that stretch reads IGNMSYWEHP…SLSEKRALTD (215 aa). A Nuclear export signal motif is present at residues 377 to 384; it reads LTNLLRQL. Residues His-423 and Cys-472 contribute to the active site.

Belongs to the peptidase C14B family. As to quaternary structure, homooligomer; forms oligomers which bind to TRAF6. Forms a complex with CARD14 and MALT1; resulting in the formation of a CBM (CARD14-BCL10-MALT1) complex. Forms a complex with CARD11 and MALT1; resulting in the formation of a CBM (CARD11-BCL10-MALT1) complex. Forms a complex with CARD9 and MALT1; resulting in the formation of a CBM (CARD9-BCL10-MALT1) complex.

The protein localises to the cytoplasm. It is found in the perinuclear region. Its subcellular location is the nucleus. In terms of biological role, protease that enhances BCL10-induced activation: acts via formation of CBM complexes that channel adaptive and innate immune signaling downstream of CARD domain-containing proteins (CARD9, CARD11 and CARD14) to activate NF-kappa-B and MAP kinase p38 pathways which stimulate expression of genes encoding pro-inflammatory cytokines and chemokines. Mediates BCL10 cleavage: MALT1-dependent BCL10 cleavage plays an important role in T-cell antigen receptor-induced integrin adhesion. Involved in the induction of T helper 17 cells (Th17) differentiation. Cleaves RC3H1 and ZC3H12A in response to T-cell receptor (TCR) stimulation which releases their cooperatively repressed targets to promote Th17 cell differentiation. Also mediates cleavage of N4BP1 in T-cells following TCR-mediated activation, leading to N4BP1 inactivation. May also have ubiquitin ligase activity: binds to TRAF6, inducing TRAF6 oligomerization and activation of its ligase activity. The polypeptide is Mucosa-associated lymphoid tissue lymphoma translocation protein 1 homolog (Mus musculus (Mouse)).